Reading from the N-terminus, the 264-residue chain is Somatomedin-B and thrombospondin type-1 domain-containing protein (264 aa).

A signal peptide spans 1–20 (MRTLWMALCALSRLWPGAQA). Residues 24–75 (EAGRCCPGRDPACFARGWRLDRVYGTCFCDQACRFTGDCCFDYDRACPARPC) form the SMB domain. Cystine bridges form between cysteine 28–cysteine 36, cysteine 28–cysteine 52, cysteine 36–cysteine 70, cysteine 50–cysteine 52, cysteine 50–cysteine 63, cysteine 56–cysteine 62, and cysteine 63–cysteine 70. Positions 74 to 127 (PCFVGEWSPWSGCADQCKPTTRVRRRSVQQEPQNGGAPCPPLEERAGCLEYSTP) constitute a TSP type-1 domain. N-linked (GlcNAc...) asparagine glycosylation occurs at asparagine 227.

This sequence belongs to the thrombospondin family. In terms of tissue distribution, detected in aorta extracellular matrix (at protein level).

It is found in the secreted. The protein localises to the extracellular space. The protein resides in the extracellular matrix. This Homo sapiens (Human) protein is Somatomedin-B and thrombospondin type-1 domain-containing protein (SBSPON).